Reading from the N-terminus, the 688-residue chain is Elongation factor G (688 aa).

Positions 8-282 constitute a tr-type G domain; sequence EKTRNIGIIA…AVVDYLPAPC (275 aa). Residues 17-24, 81-85, and 135-138 each bind GTP; these read AHIDAGKT, DTPGH, and NKMD.

It belongs to the TRAFAC class translation factor GTPase superfamily. Classic translation factor GTPase family. EF-G/EF-2 subfamily.

It is found in the cytoplasm. Catalyzes the GTP-dependent ribosomal translocation step during translation elongation. During this step, the ribosome changes from the pre-translocational (PRE) to the post-translocational (POST) state as the newly formed A-site-bound peptidyl-tRNA and P-site-bound deacylated tRNA move to the P and E sites, respectively. Catalyzes the coordinated movement of the two tRNA molecules, the mRNA and conformational changes in the ribosome. This chain is Elongation factor G, found in Aster yellows witches'-broom phytoplasma (strain AYWB).